A 371-amino-acid polypeptide reads, in one-letter code: tRNA-specific 2-thiouridylase MnmA (371 aa).

Residues Gly-11–Ser-18 and Met-37 contribute to the ATP site. The interval Asn-97–Asp-99 is interaction with target base in tRNA. Catalysis depends on Cys-102, which acts as the Nucleophile. A disulfide bond links Cys-102 and Cys-199. Gly-127 lines the ATP pocket. Residues Lys-149–Gln-151 are interaction with tRNA. The active-site Cysteine persulfide intermediate is Cys-199. The interaction with tRNA stretch occupies residues Arg-311–Tyr-312.

This sequence belongs to the MnmA/TRMU family.

Its subcellular location is the cytoplasm. The enzyme catalyses S-sulfanyl-L-cysteinyl-[protein] + uridine(34) in tRNA + AH2 + ATP = 2-thiouridine(34) in tRNA + L-cysteinyl-[protein] + A + AMP + diphosphate + H(+). Catalyzes the 2-thiolation of uridine at the wobble position (U34) of tRNA, leading to the formation of s(2)U34. This chain is tRNA-specific 2-thiouridylase MnmA, found in Idiomarina loihiensis (strain ATCC BAA-735 / DSM 15497 / L2-TR).